We begin with the raw amino-acid sequence, 242 residues long: UPF0246 protein SPP_1571 (242 aa).

This sequence belongs to the UPF0246 family.

The protein is UPF0246 protein SPP_1571 of Streptococcus pneumoniae (strain P1031).